The chain runs to 124 residues: BLOC-1-related complex subunit 8 (124 aa).

A disordered region spans residues 102-124; sequence SSSQGRSAVINPNETPAHTSVTP.

Belongs to the BORCS8 family.

The protein localises to the lysosome membrane. Its function is as follows. As part of a BORC-like complex, it may play a role in the movement and localization of lysosomes at the cell periphery. Associated with the cytosolic face of lysosomes, this complex may couple lysosomes to microtubule plus-end-directed kinesin motors, driving lysosome movement toward the cell periphery. The protein is BLOC-1-related complex subunit 8 of Danio rerio (Zebrafish).